The following is a 687-amino-acid chain: POZ-, AT hook-, and zinc finger-containing protein 1 (687 aa).

Residues 41–130 form the BTB domain; it reads CDVLLRVGDE…AYTSRIVVRL (90 aa). A Glycyl lysine isopeptide (Lys-Gly) (interchain with G-Cter in SUMO2) cross-link involves residue lysine 112. The span at 250–260 shows a compositional bias: low complexity; that stretch reads PFPSVASSAPP. The tract at residues 250 to 278 is disordered; it reads PFPSVASSAPPLTGKRGRGRPRKANLLDS. The a.T hook DNA-binding region spans 264–276; it reads KRGRGRPRKANLL. Lysine 272 participates in a covalent cross-link: Glycyl lysine isopeptide (Lys-Gly) (interchain with G-Cter in SUMO2). Position 282 is a phosphoserine (serine 282). The segment at 292 to 314 adopts a C2H2-type 1 zinc-finger fold; it reads LPCGLCGKVFTDANRLRQHEAQH. The tract at residues 332–351 is disordered; the sequence is GENGLPISEDPDGPRKRSRT. 5 consecutive C2H2-type zinc fingers follow at residues 355-377, 383-405, 413-436, 442-464, and 495-518; these read VACE…KLSH, YSCP…VRSH, YICQ…KQVH, HKCQ…LACH, and NFCS…KTHH. A compositionally biased stretch (basic and acidic residues) spans 549–558; the sequence is EGQKCSHQDP. The segment at 549–603 is disordered; it reads EGQKCSHQDPIESSDSYGDLSDASDLKTPEKQSANGSFSCDMAVPKNKMESDGEK. The segment at 605 to 628 adopts a C2H2-type 7 zinc-finger fold; that stretch reads YPCPECGSFFRSKSYLNKHIQKVH.

It belongs to the krueppel C2H2-type zinc-finger protein family. Homodimer. Interacts with RNF4. Interacts (via C-terminus) with TP53; this interaction inhibits TP53 ability to activate transcription. As to expression, ubiquitous.

Its subcellular location is the nucleus. Its function is as follows. Transcriptional regulator that plays a role in many biological processes such as embryogenesis, senescence, T-cell development or neurogenesis. Interacts with the TP53 protein to control genes that are important in proliferation and in the DNA-damage response. Mechanistically, the interaction inhibits the DNA binding and transcriptional activity of TP53/p53. Part of the transcriptional network modulating regulatory T-cell development and controls the generation of the regulatory T-cell pool under homeostatic conditions. Functionally, (Microbial infection) Plays a positive role in viral cDNA synthesis. The protein is POZ-, AT hook-, and zinc finger-containing protein 1 (PATZ1) of Homo sapiens (Human).